A 2035-amino-acid polypeptide reads, in one-letter code: Proline-rich protein 12 (2035 aa).

Disordered regions lie at residues 210–280 (GGGV…ERAL), 292–311 (RPAS…LQHY), 329–584 (CSPL…GAPG), and 645–685 (QAPS…GTPY). A compositionally biased stretch (pro residues) spans 223-240 (QTPPYRPGPPDPPPPPRH). A compositionally biased stretch (low complexity) spans 249 to 261 (ASSSAATAAEPSS). Residues 296-305 (AQPPPPPPPA) are compositionally biased toward pro residues. Phosphoserine is present on residues S330 and S338. The segment covering 338-364 (SPGAGEPSKGGPSGATAGAAGRATGPE) has biased composition (low complexity). The segment covering 365–377 (TAGGGAAGGGGGY) has biased composition (gly residues). 2 stretches are compositionally biased toward low complexity: residues 408-429 (STAT…AGKA) and 437-455 (SQAY…QAYG). Residues 476–487 (PPQPPSGPPPPG) are compositionally biased toward pro residues. 2 stretches are compositionally biased toward polar residues: residues 490–501 (TCQSYSPDQLQG) and 520–534 (GLPT…STGH). A compositionally biased stretch (gly residues) spans 540 to 555 (GHGGGWGPSSLGGGGE). The residue at position 648 (S648) is a Phosphoserine. A compositionally biased stretch (gly residues) spans 670–681 (GLGGSGGAGGAP). A Phosphothreonine modification is found at T735. Disordered regions lie at residues 755–844 (AFLQ…PLQL), 851–870 (HGLE…SLEP), 879–920 (GALE…APRF), and 946–1061 (EMFG…CSTK). Positions 830–841 (PQPPPPPPPPMP) are enriched in pro residues. A Phosphoserine modification is found at S859. Residues 1031–1046 (SAPPPPPPPPPPPPVS) show a composition bias toward pro residues. S1070 and S1128 each carry phosphoserine. 4 disordered regions span residues 1112–1244 (RRLP…DHNS), 1288–1355 (PLYQ…SPCK), 1367–1567 (TLPS…GEGI), and 1662–1839 (HRPP…PGRL). The span at 1190–1199 (KPRGRGRGRG) shows a compositional bias: basic residues. Basic and acidic residues predominate over residues 1200–1214 (RKAEEMGGTRLEPLK). Position 1214 is an N6-acetyllysine (K1214). T1295 carries the post-translational modification Phosphothreonine. S1299 is modified (phosphoserine). Positions 1314–1329 (QPPPPTVPTVPHPAPS) are enriched in pro residues. 3 positions are modified to phosphoserine: S1372, S1373, and S1378. Residues 1449–1529 (PPTPPPAPTP…PPEEPPAPSP (81 aa)) show a composition bias toward pro residues. A compositionally biased stretch (basic and acidic residues) spans 1535 to 1547 (PDARPLHLAKKQE). T1555 carries the post-translational modification Phosphothreonine. S1562 carries the post-translational modification Phosphoserine. Over residues 1698–1709 (ETPEKMTSEKPP) the composition is skewed to basic and acidic residues. T1699 is subject to Phosphothreonine. The span at 1710–1730 (EPAPEPAVPEPPAPEKPSPPR) shows a compositional bias: pro residues. Over residues 1731–1768 (PVEKEKEKEKEKEKEKERVTRPLRSERATSGRQMRTDR) the composition is skewed to basic and acidic residues. A compositionally biased stretch (polar residues) spans 1769–1779 (SLATGQSTTSR). The segment covering 1817–1828 (SSSDSESSPGAP) has biased composition (low complexity). S1924 carries the post-translational modification Phosphoserine.

As to expression, expressed in brain.

The protein resides in the nucleus. It localises to the postsynaptic density. Its subcellular location is the synapse. The protein localises to the synaptosome. The polypeptide is Proline-rich protein 12 (Mus musculus (Mouse)).